We begin with the raw amino-acid sequence, 63 residues long: Keratin-associated protein 19-7 (63 aa).

Belongs to the KRTAP type 19 family. In terms of assembly, interacts with hair keratins.

In the hair cortex, hair keratin intermediate filaments are embedded in an interfilamentous matrix, consisting of hair keratin-associated proteins (KRTAP), which are essential for the formation of a rigid and resistant hair shaft through their extensive disulfide bond cross-linking with abundant cysteine residues of hair keratins. The matrix proteins include the high-sulfur and high-glycine-tyrosine keratins. This is Keratin-associated protein 19-7 (KRTAP19-7) from Homo sapiens (Human).